Consider the following 519-residue polypeptide: Anthranilate synthase component 1 (519 aa).

L-tryptophan contacts are provided by residues Ser-39 and 290–292; that span reads PYM. Position 327–328 (327–328) interacts with chorismate; the sequence is GT. Residue Glu-360 participates in Mg(2+) binding. Chorismate-binding positions include Tyr-448, Arg-468, 482–484, and Gly-484; that span reads GAG. Glu-497 provides a ligand contact to Mg(2+).

The protein belongs to the anthranilate synthase component I family. As to quaternary structure, heterotetramer consisting of two non-identical subunits: a beta subunit (TrpG) and a large alpha subunit (TrpE). Requires Mg(2+) as cofactor.

It carries out the reaction chorismate + L-glutamine = anthranilate + pyruvate + L-glutamate + H(+). It functions in the pathway amino-acid biosynthesis; L-tryptophan biosynthesis; L-tryptophan from chorismate: step 1/5. Feedback inhibited by tryptophan. Part of a heterotetrameric complex that catalyzes the two-step biosynthesis of anthranilate, an intermediate in the biosynthesis of L-tryptophan. In the first step, the glutamine-binding beta subunit (TrpG) of anthranilate synthase (AS) provides the glutamine amidotransferase activity which generates ammonia as a substrate that, along with chorismate, is used in the second step, catalyzed by the large alpha subunit of AS (TrpE) to produce anthranilate. In the absence of TrpG, TrpE can synthesize anthranilate directly from chorismate and high concentrations of ammonia. The polypeptide is Anthranilate synthase component 1 (trpE) (Serratia marcescens).